Here is a 1121-residue protein sequence, read N- to C-terminus: MSLENEDKRARTRSKALRGPPETTAADLSCPTPGCTGSGHVRGKYSRHRSLQSCPLAKKRKLEGAEAEHLVSKRKSHPLKLALDEGYGVDSDGSEDTEVKDASVSDESEGTLEGAEAETSGQDEIHRPETAEGRSPVKSHFGSNPIGSATASSKGSYSSYQGIIATSLLNLGQIAEETLVEEDLGQAAKPGPGIVHLLQEAAEGAASEEGEKGLFIQPEDAEEVVEVTTERSQDLCPQSLEDAASEESSKQKGILSHEEEDEEEEEEEEEEEEDEEEEEEEEEEEEEEEEEEEEEEEEEEEEEEEEAAPDVIFQEDTSHTSAQKAPELRGPESPSPKPEYSVIVEVRSDDDKDEDTHSRKSTVTDESEMQDMMTRGNLGLLEQAIALKAEQVRTVCEPGCPPAEQSQLGLGEPGKAAKPLDTVRKSYYSKDPSRAEKREIKCPTPGCDGTGHVTGLYPHHRSLSGCPHKDRIPPEILAMHENVLKCPTPGCTGQGHVNSNRNTHRSLSGCPIAAAEKLAKSHEKQQPQTGDPSKSSSNSDRILRPMCFVKQLEVPPYGSYRPNVAPATPRANLAKELEKFSKVTFDYASFDAQVFGKRMLAPKIQTSETSPKAFQCFDYSQDAEAAHMAATAILNLSTRCWEMPENLSTKPQDLPSKSVDIEVDENGTLDLSMHKHRKRENAFPSSSSCSSSPGVKSPDASQRHSSTSAPSSSMTSPQSSQASRQDEWDRPLDYTKPSRLREEEPEESEPAAHSFASSEADDQEVSEENFEERKYPGEVTLTNFKLKFLSKDIKKELLTCPTPGCDGSGHITGNYASHRSLSGCPLADKSLRNLMAAHSADLKCPTPGCDGSGHITGNYASHRSLSGCPRAKKSGVKVAPTKDDKEDPELMKCPVPGCVGLGHISGKYASHRSASGCPLAARRQKEGSLNGSSFSWKSLKNEGPTCPTPGCDGSGHANGSFLTHRSLSGCPRATFAGKKGKLSGDEVLSPKFKTSDVLENDEEIKQLNQEIRDLNESNSEMEAAMVQLQSQISSMEKNLKNIEEENKLIEEQNEALFLELSGLSQALIQSLANIRLPHMEPICEQNFDAYVSTLTDMYSNQDPENKDLLESIKQAVRGIQV.

2 disordered regions span residues 1–156 and 200–376; these read MSLE…SKGS and EAAE…MTRG. Residues 21-64 form a CCHHC-type 1 zinc finger; sequence PETTAADLSCPTPGCTGSGHVRGKYSRHRSLQSCPLAKKRKLEG. Zn(2+) is bound by residues cysteine 30, cysteine 35, histidine 48, and cysteine 54. Residues 41-50 are compositionally biased toward basic residues; the sequence is VRGKYSRHRS. Composition is skewed to basic and acidic residues over residues 62–71 and 123–132; these read LEGAEAEHLV and DEIHRPETAE. Residues 147–156 show a composition bias toward low complexity; that stretch reads GSATASSKGS. Positions 258–308 are enriched in acidic residues; it reads EEEDEEEEEEEEEEEEDEEEEEEEEEEEEEEEEEEEEEEEEEEEEEEEEAA. A compositionally biased stretch (basic and acidic residues) spans 346–358; the sequence is VRSDDDKDEDTHS. 2 CCHHC-type zinc fingers span residues 433–476 and 477–520; these read SRAE…PPEI and LAMH…KLAK. Zn(2+)-binding residues include cysteine 442, cysteine 447, histidine 460, cysteine 466, cysteine 486, cysteine 491, histidine 504, and cysteine 510. 2 disordered regions span residues 517–540 and 668–774; these read KLAK…SNSD and TLDL…EERK. The span at 526–540 shows a compositional bias: polar residues; that stretch reads QPQTGDPSKSSSNSD. Low complexity predominate over residues 705–723; that stretch reads SSTSAPSSSMTSPQSSQAS. Over residues 724 to 733 the composition is skewed to basic and acidic residues; that stretch reads RQDEWDRPLD. A compositionally biased stretch (acidic residues) spans 759 to 770; it reads EADDQEVSEENF. 4 consecutive CCHHC-type zinc fingers follow at residues 791-834, 835-878, 884-927, and 937-980; these read KDIK…LRNL, MAAH…GVKV, DKED…QKEG, and KSLK…GKKG. Zn(2+) contacts are provided by cysteine 800, cysteine 805, histidine 818, cysteine 824, cysteine 844, cysteine 849, histidine 862, cysteine 868, cysteine 893, cysteine 898, histidine 911, cysteine 917, cysteine 946, cysteine 951, histidine 964, and cysteine 970.

It belongs to the MYT1 family. As to quaternary structure, interacts with STEAP3. Mostly in developing nervous system. Expressed in neural progenitors and oligodendrocyte lineage cells. More highly expressed in oligodendrocyte progenitors than in differentiated oligodendrocytes.

The protein localises to the nucleus. Its function is as follows. Binds to the promoter region of genes encoding proteolipid proteins of the central nervous system. May play a role in the development of neurons and oligodendroglia in the CNS. May regulate a critical transition point in oligodendrocyte lineage development by modulating oligodendrocyte progenitor proliferation relative to terminal differentiation and up-regulation of myelin gene transcription. The sequence is that of Myelin transcription factor 1 (MYT1) from Homo sapiens (Human).